A 370-amino-acid polypeptide reads, in one-letter code: Putative agmatine deiminase (370 aa).

The active-site Amidino-cysteine intermediate is C361.

It belongs to the agmatine deiminase family.

The catalysed reaction is agmatine + H2O = N-carbamoylputrescine + NH4(+). This Shewanella baltica (strain OS155 / ATCC BAA-1091) protein is Putative agmatine deiminase.